Consider the following 303-residue polypeptide: Phytochrome-associated serine/threonine-protein phosphatase 1 (303 aa).

4 residues coordinate Zn(2+): Asp50, His52, Asp78, and Asn110. Residue His111 is the Proton donor of the active site. Zn(2+) is bound by residues His160 and His234.

It belongs to the PPP phosphatase family. PP-6 (PP-V) subfamily. As to quaternary structure, interacts with PHYA and PHYB, mostly when they are phosphorylated and in Pfr forms. Interacts with TAP46. Interacts with PIN1 and PIN2. Interacts with ABI5. Interacts with PIF3 and PIF4. Protein phosphatase 6 (PP6) holoenzyme is a heterotrimeric complex formed by the catalytic subunit FYPP, a SAPS domain-containing subunit (SAL) and a protein phosphatase 2A regulatory subunit A (PP2AA). It depends on Zn(2+) as a cofactor. In terms of tissue distribution, mostly expressed in flowers. Also detected to a lower extent in stems and leaves. Expressed in roots.

It localises to the cytoplasm. The enzyme catalyses O-phospho-L-seryl-[protein] + H2O = L-seryl-[protein] + phosphate. The catalysed reaction is O-phospho-L-threonyl-[protein] + H2O = L-threonyl-[protein] + phosphate. Its function is as follows. Catalytic subunit of protein phosphatase 6 (PP6). Dephosphorylates phosphorylated phytochromes, with a preference toward Pfr forms. Plays a major role in the photoperiodic control of flowering time in long days by modulating phytochrome signals in flowering time control. Involved in the regulation of polar auxin transport in roots. Dephosphorylates directly the auxin efflux carriers PIN1 and PIN2, thus promoting their proper polar localization in root cell plasma membrane. Acts antagonistically with the protein kinase PID to regulate the reversible phosphorylation of PIN and polar targeting, subsequently impacting polar auxin transport and plant development. Involved in the regulation of abscisic acid (ABA) signaling during seed germination and postgermination seedling growth. Functions as a negative regulator of ABA signaling through direct dephosphorylation and destabilization of ABI5. Acts antagonistically with the protein kinase SRK2E/SNRK2.6 to regulate ABI5 phosphorylation and ABA responses. Involved in the regulation of phosphorylation status in hypocotyl phototropism. Involved in the negative regulation of photomorphogenesis by controlling the stability and transcriptional activity of PIF3 and PIF4 proteins in the dark, via the regulation of their phosphorylation status. The polypeptide is Phytochrome-associated serine/threonine-protein phosphatase 1 (Arabidopsis thaliana (Mouse-ear cress)).